A 410-amino-acid polypeptide reads, in one-letter code: MNPQLNKLTLPIYMDYQATTPIDPRVMEAMLPYFTTKFGNPHSRSHSFGWEAENAVEEARSMVAKLIGADTKEIIFTSGATESNNLAIKGIAKFYSNKKNHIITVVSEHKCVLDACRHLEQEGIKITYLPIKPNGIIDLETLKNAITDQTMLVSVMVVNNEIGVVQPLKEIGKICREKGVFFHSDIAQGFGKIPIDVNEFNIDLASISGHKIYGPKGIGALYVRKKPRVRVTPLINGGGQERGMRSGTLPTPLIVGLGMAAEIAYSEMEKDTKHVNYLFDRFLNNIHKRISEVYLNGDKNQRYKGNVNLSFAGVEGESIILAIKDLAVSSGSACTSASLEPSYVLRSMGIGEELAHTAIRFGIGRFTTEQEVDYAVNLICSKIDKLRELSPLWEMMQEGIDLKKIKWAVH.

Residues 80–81, Asn160, Gln188, and 208–210 contribute to the pyridoxal 5'-phosphate site; these read AT and SGH. Residue Lys211 is modified to N6-(pyridoxal phosphate)lysine. Pyridoxal 5'-phosphate is bound at residue Thr248. The Cysteine persulfide intermediate role is filled by Cys334. [2Fe-2S] cluster is bound at residue Cys334.

The protein belongs to the class-V pyridoxal-phosphate-dependent aminotransferase family. NifS/IscS subfamily. As to quaternary structure, homodimer. Forms a heterotetramer with IscU, interacts with other sulfur acceptors. The cofactor is pyridoxal 5'-phosphate.

Its subcellular location is the cytoplasm. The catalysed reaction is (sulfur carrier)-H + L-cysteine = (sulfur carrier)-SH + L-alanine. It functions in the pathway cofactor biosynthesis; iron-sulfur cluster biosynthesis. Functionally, master enzyme that delivers sulfur to a number of partners involved in Fe-S cluster assembly, tRNA modification or cofactor biosynthesis. Catalyzes the removal of elemental sulfur atoms from cysteine to produce alanine. Functions as a sulfur delivery protein for Fe-S cluster synthesis onto IscU, an Fe-S scaffold assembly protein, as well as other S acceptor proteins. The protein is Cysteine desulfurase IscS of Rickettsia massiliae (strain Mtu5).